Consider the following 142-residue polypeptide: NADH-quinone oxidoreductase subunit A (142 aa).

Transmembrane regions (helical) follow at residues Phe8 to Thr28, Phe63 to Trp83, and Phe93 to Trp113.

It belongs to the complex I subunit 3 family. As to quaternary structure, NDH-1 is composed of 14 different subunits. Subunits NuoA, H, J, K, L, M, N constitute the membrane sector of the complex.

Its subcellular location is the cell inner membrane. The catalysed reaction is a quinone + NADH + 5 H(+)(in) = a quinol + NAD(+) + 4 H(+)(out). NDH-1 shuttles electrons from NADH, via FMN and iron-sulfur (Fe-S) centers, to quinones in the respiratory chain. The immediate electron acceptor for the enzyme in this species is believed to be a menaquinone. Couples the redox reaction to proton translocation (for every two electrons transferred, four hydrogen ions are translocated across the cytoplasmic membrane), and thus conserves the redox energy in a proton gradient. This Chlorobium phaeobacteroides (strain BS1) protein is NADH-quinone oxidoreductase subunit A.